We begin with the raw amino-acid sequence, 327 residues long: Malate dehydrogenase (327 aa).

11–17 lines the NAD(+) pocket; sequence GAAGNIS. Positions 92 and 98 each coordinate substrate. NAD(+) contacts are provided by residues asparagine 105, glutamine 112, and 129 to 131; that span reads VGN. 2 residues coordinate substrate: asparagine 131 and arginine 162. Catalysis depends on histidine 187, which acts as the Proton acceptor. Residues 304 to 327 are disordered; that stretch reads SQEKMKATEQELSEERDAVEHLLP.

Belongs to the LDH/MDH superfamily. MDH type 2 family.

The catalysed reaction is (S)-malate + NAD(+) = oxaloacetate + NADH + H(+). Catalyzes the reversible oxidation of malate to oxaloacetate. This Psychrobacter sp. (strain PRwf-1) protein is Malate dehydrogenase.